Consider the following 2167-residue polypeptide: GTPase-activating protein BEM2/IPL2 (2167 aa).

Disordered regions lie at residues 1 to 209 (MKGL…NDNE), 243 to 305 (TNYN…ASAR), and 353 to 372 (NSSIANENHQQKKQQTNNQA). Residues 12–51 (SSTASASSSSTSTSHKTTTASTASSSSPSSSSQTIRNSTS) are compositionally biased toward low complexity. Lys27 participates in a covalent cross-link: Glycyl lysine isopeptide (Lys-Gly) (interchain with G-Cter in ubiquitin). Basic residues predominate over residues 58–70 (HSHHHHGQGHSHH). Residues 89 to 118 (KQYTSTSSSQVNLGMYHSDTNTRSSRSIAS) show a composition bias toward polar residues. Ser129 carries the post-translational modification Phosphoserine. Positions 134–145 (SNSSSQKSNAQD) are enriched in polar residues. Composition is skewed to low complexity over residues 160–177 (SLLPSRSSSLSPPQSRCS) and 187–207 (NTSGISNSSGTNNNNSNNNND). A compositionally biased stretch (polar residues) spans 243–252 (TNYNSSMTAP). Ser283 is modified (phosphoserine). The segment covering 289-300 (SSSTTATNSGND) has biased composition (low complexity). Positions 592–859 (DITTLADEVH…MKLSVQHEPP (268 aa)) constitute a Ras-GEF domain. A phosphoserine mark is found at Ser1012 and Ser1016. The residue at position 1038 (Thr1038) is a Phosphothreonine. 3 positions are modified to phosphoserine: Ser1046, Ser1054, and Ser1128. Positions 1771–1794 (ISGTHSDNDHSYNINKNTGQTPSL) are enriched in polar residues. Residues 1771–1828 (ISGTHSDNDHSYNINKNTGQTPSLGSVMESNNSARNRRDSRASFSTNRSSVVSNSSHN) form a disordered region. The segment covering 1812–1828 (ASFSTNRSSVVSNSSHN) has biased composition (low complexity). In terms of domain architecture, PH spans 1846-1948 (GFNTSSSNYS…WIKMIKASKR (103 aa)). The 199-residue stretch at 1967–2165 (VPLEDVCERE…DFIKNPNDYF (199 aa)) folds into the Rho-GAP domain.

Functionally, GTPase-activating protein (GAP) for RHO1 and RHO2. Involved in the control of cellular morphogenesis. Required for proper bud site selection and bud emergence. The chain is GTPase-activating protein BEM2/IPL2 (BEM2) from Saccharomyces cerevisiae (strain ATCC 204508 / S288c) (Baker's yeast).